The sequence spans 102 residues: MNYINMKKIDEENKANSGDDTTESRKKQKTKNNEEHEIRSDELFRKSIFFDSHWNPNGVAPPNHRNVFYNPKTFVHRGKPIIAKLMDLDEEHLTKLISKTQK.

Residues 1–38 (MNYINMKKIDEENKANSGDDTTESRKKQKTKNNEEHEI) form a disordered region.

It belongs to the AIM4 family.

Its subcellular location is the cytoplasm. The polypeptide is Altered inheritance of mitochondria protein 4 (AIM4) (Vanderwaltozyma polyspora (strain ATCC 22028 / DSM 70294 / BCRC 21397 / CBS 2163 / NBRC 10782 / NRRL Y-8283 / UCD 57-17) (Kluyveromyces polysporus)).